We begin with the raw amino-acid sequence, 552 residues long: Pyrophosphate--fructose 6-phosphate 1-phosphotransferase subunit beta (552 aa).

Glycine 90 is a binding site for diphosphate. Aspartate 184 is a binding site for Mg(2+). Substrate is bound by residues 212-214 (TID), 251-252 (KY), 259-261 (MGR), glutamate 320, and 425-428 (YEGR). Aspartate 214 functions as the Proton acceptor in the catalytic mechanism.

This sequence belongs to the phosphofructokinase type A (PFKA) family. PPi-dependent PFK group II subfamily. Clade 'Long' sub-subfamily. In terms of assembly, tetramer of two alpha (regulatory) and two beta (catalytic) chains. Mg(2+) serves as cofactor.

It is found in the cytoplasm. It catalyses the reaction beta-D-fructose 6-phosphate + diphosphate = beta-D-fructose 1,6-bisphosphate + phosphate + H(+). The protein operates within carbohydrate degradation; glycolysis; D-glyceraldehyde 3-phosphate and glycerone phosphate from D-glucose: step 3/4. With respect to regulation, allosterically activated by fructose 2,6-bisphosphate. In terms of biological role, catalytic subunit of pyrophosphate--fructose 6-phosphate 1-phosphotransferase. Catalyzes the phosphorylation of D-fructose 6-phosphate, the first committing step of glycolysis. Uses inorganic phosphate (PPi) as phosphoryl donor instead of ATP like common ATP-dependent phosphofructokinases (ATP-PFKs), which renders the reaction reversible, and can thus function both in glycolysis and gluconeogenesis. The protein is Pyrophosphate--fructose 6-phosphate 1-phosphotransferase subunit beta of Ricinus communis (Castor bean).